The sequence spans 441 residues: DNA primase DnaG (441 aa).

One can recognise a Toprim domain in the interval 165–241 (DTIIIVEGRA…DIDYVARAPP (77 aa)). Mg(2+) is bound by residues Glu-171, Asp-215, and Asp-217. The segment covering 299–315 (KEEVAERGEEMESKAEG) has biased composition (basic and acidic residues). The tract at residues 299–320 (KEEVAERGEEMESKAEGAEQPT) is disordered.

This sequence belongs to the archaeal DnaG primase family. Forms a ternary complex with MCM helicase and DNA. Component of the archaeal exosome complex. Mg(2+) serves as cofactor.

The enzyme catalyses ssDNA + n NTP = ssDNA/pppN(pN)n-1 hybrid + (n-1) diphosphate.. In terms of biological role, RNA polymerase that catalyzes the synthesis of short RNA molecules used as primers for DNA polymerase during DNA replication. Also part of the exosome, which is a complex involved in RNA degradation. Acts as a poly(A)-binding protein that enhances the interaction between heteromeric, adenine-rich transcripts and the exosome. In Ignicoccus hospitalis (strain KIN4/I / DSM 18386 / JCM 14125), this protein is DNA primase DnaG.